We begin with the raw amino-acid sequence, 407 residues long: Arginine biosynthesis bifunctional protein ArgJ (407 aa).

Residues threonine 157, lysine 183, threonine 194, glutamate 280, asparagine 402, and threonine 407 each contribute to the substrate site. Threonine 194 (nucleophile) is an active-site residue.

It belongs to the ArgJ family. Heterotetramer of two alpha and two beta chains.

It localises to the cytoplasm. The catalysed reaction is N(2)-acetyl-L-ornithine + L-glutamate = N-acetyl-L-glutamate + L-ornithine. It catalyses the reaction L-glutamate + acetyl-CoA = N-acetyl-L-glutamate + CoA + H(+). The protein operates within amino-acid biosynthesis; L-arginine biosynthesis; L-ornithine and N-acetyl-L-glutamate from L-glutamate and N(2)-acetyl-L-ornithine (cyclic): step 1/1. Its pathway is amino-acid biosynthesis; L-arginine biosynthesis; N(2)-acetyl-L-ornithine from L-glutamate: step 1/4. Catalyzes two activities which are involved in the cyclic version of arginine biosynthesis: the synthesis of N-acetylglutamate from glutamate and acetyl-CoA as the acetyl donor, and of ornithine by transacetylation between N(2)-acetylornithine and glutamate. This Oceanobacillus iheyensis (strain DSM 14371 / CIP 107618 / JCM 11309 / KCTC 3954 / HTE831) protein is Arginine biosynthesis bifunctional protein ArgJ.